We begin with the raw amino-acid sequence, 154 residues long: Myoglobin (154 aa).

The 147-residue stretch at Gly2 to Lys148 folds into the Globin domain. Residue Ser4 is modified to Phosphoserine. Thr68 is modified (phosphothreonine). A heme b-binding site is contributed by His94.

This sequence belongs to the globin family. Monomeric.

It localises to the cytoplasm. The protein resides in the sarcoplasm. The catalysed reaction is Fe(III)-heme b-[protein] + nitric oxide + H2O = Fe(II)-heme b-[protein] + nitrite + 2 H(+). It carries out the reaction H2O2 + AH2 = A + 2 H2O. Its function is as follows. Monomeric heme protein which primary function is to store oxygen and facilitate its diffusion within muscle tissues. Reversibly binds oxygen through a pentacoordinated heme iron and enables its timely and efficient release as needed during periods of heightened demand. Depending on the oxidative conditions of tissues and cells, and in addition to its ability to bind oxygen, it also has a nitrite reductase activity whereby it regulates the production of bioactive nitric oxide. Under stress conditions, like hypoxia and anoxia, it also protects cells against reactive oxygen species thanks to its pseudoperoxidase activity. This chain is Myoglobin (MB), found in Elephas maximus (Indian elephant).